A 371-amino-acid chain; its full sequence is Gustatory receptor-like 65a (371 aa).

Residues 1–13 lie on the Cytoplasmic side of the membrane; the sequence is MREVNLLNRFTRQ. A helical membrane pass occupies residues 14 to 34; that stretch reads FLFLIVLVTQICGVATFVYNS. Over 35-42 the chain is Extracellular; that stretch reads KAQCFRQS. The chain crosses the membrane as a helical span at residues 43 to 63; it reads GFLRFYSSLVLIFLALFLIVT. Over 64–72 the chain is Cytoplasmic; it reads TSKMFHNLQ. The chain crosses the membrane as a helical span at residues 73-93; that stretch reads AVWPYVVGSVIILVVRIHGLL. Residues 94–126 lie on the Extracellular side of the membrane; that stretch reads ESAEIVELLNQMLRIMRQVNLMARHPNLFRLKH. A helical membrane pass occupies residues 127–147; the sequence is LLLLLLALQNLLRSLNTIVGI. The Cytoplasmic segment spans residues 148-161; the sequence is SNHSAEAYDSFLNS. The chain crosses the membrane as a helical span at residues 162–182; the sequence is VILLIILAVLLSFLLQITINI. Topologically, residues 183-251 are extracellular; sequence CLFVVLIATY…FHITVRIIRH (69 aa). The chain crosses the membrane as a helical span at residues 252-272; sequence FRFHWLCAIIYGLLPFFSLTA. The Cytoplasmic segment spans residues 273–277; that stretch reads KDQNG. A helical transmembrane segment spans residues 278 to 298; sequence FNFLIISALNIIFQWTIFAIL. At 299–371 the chain is on the extracellular side; it reads SRESRITRSL…FVNRLEYLHI (73 aa).

It is found in the cell membrane. In Drosophila melanogaster (Fruit fly), this protein is Gustatory receptor-like 65a.